A 484-amino-acid polypeptide reads, in one-letter code: Chromosomal replication initiator protein DnaA (484 aa).

The interval methionine 1–isoleucine 83 is domain I, interacts with DnaA modulators. Residues isoleucine 83–asparagine 146 form a domain II region. Positions glycine 110–asparagine 146 are disordered. Basic residues predominate over residues leucine 116–glutamine 125. Over residues serine 135–asparagine 146 the composition is skewed to basic and acidic residues. The domain III, AAA+ region stretch occupies residues glutamine 147–alanine 364. Residues glycine 191, glycine 193, lysine 194, and threonine 195 each contribute to the ATP site. A domain IV, binds dsDNA region spans residues threonine 365–glycine 484.

This sequence belongs to the DnaA family. As to quaternary structure, oligomerizes as a right-handed, spiral filament on DNA at oriC.

The protein resides in the cytoplasm. In terms of biological role, plays an essential role in the initiation and regulation of chromosomal replication. ATP-DnaA binds to the origin of replication (oriC) to initiate formation of the DNA replication initiation complex once per cell cycle. Binds the DnaA box (a 9 base pair repeat at the origin) and separates the double-stranded (ds)DNA. Forms a right-handed helical filament on oriC DNA; dsDNA binds to the exterior of the filament while single-stranded (ss)DNA is stabiized in the filament's interior. The ATP-DnaA-oriC complex binds and stabilizes one strand of the AT-rich DNA unwinding element (DUE), permitting loading of DNA polymerase. After initiation quickly degrades to an ADP-DnaA complex that is not apt for DNA replication. Binds acidic phospholipids. The chain is Chromosomal replication initiator protein DnaA from Zymomonas mobilis subsp. mobilis (strain ATCC 31821 / ZM4 / CP4).